Here is a 764-residue protein sequence, read N- to C-terminus: 5-methyltetrahydropteroyltriglutamate--homocysteine methyltransferase (764 aa).

5-methyltetrahydropteroyltri-L-glutamate is bound by residues 17-20 and K117; that span reads RELK. Residues 437–439 and E490 each bind L-homocysteine; that span reads IGS. L-methionine is bound by residues 437-439 and E490; that span reads IGS. 5-methyltetrahydropteroyltri-L-glutamate is bound by residues 521–522 and W567; that span reads RC. D605 lines the L-homocysteine pocket. D605 lines the L-methionine pocket. E611 serves as a coordination point for 5-methyltetrahydropteroyltri-L-glutamate. H647, C649, and E671 together coordinate Zn(2+). Residue H701 is the Proton donor of the active site. C733 contacts Zn(2+).

This sequence belongs to the vitamin-B12 independent methionine synthase family. Zn(2+) serves as cofactor.

The catalysed reaction is 5-methyltetrahydropteroyltri-L-glutamate + L-homocysteine = tetrahydropteroyltri-L-glutamate + L-methionine. It functions in the pathway amino-acid biosynthesis; L-methionine biosynthesis via de novo pathway; L-methionine from L-homocysteine (MetE route): step 1/1. Its function is as follows. Catalyzes the transfer of a methyl group from 5-methyltetrahydrofolate to homocysteine resulting in methionine formation. This Blochmanniella pennsylvanica (strain BPEN) protein is 5-methyltetrahydropteroyltriglutamate--homocysteine methyltransferase.